The primary structure comprises 216 residues: Small ribosomal subunit protein uS3 (216 aa).

Positions 20–91 constitute a KH type-2 domain; the sequence is LKEFFEKALV…SVEIVVEKVH (72 aa).

The protein belongs to the universal ribosomal protein uS3 family.

This is Small ribosomal subunit protein uS3 (RPS3) from Encephalitozoon cuniculi (strain GB-M1) (Microsporidian parasite).